The following is a 368-amino-acid chain: UDP-N-acetylglucosamine--N-acetylmuramyl-(pentapeptide) pyrophosphoryl-undecaprenol N-acetylglucosamine transferase (368 aa).

Residues 10–12, N124, S196, I251, and Q296 contribute to the UDP-N-acetyl-alpha-D-glucosamine site; that span reads TGG.

The protein belongs to the glycosyltransferase 28 family. MurG subfamily.

It is found in the cell membrane. It catalyses the reaction Mur2Ac(oyl-L-Ala-gamma-D-Glu-L-Lys-D-Ala-D-Ala)-di-trans,octa-cis-undecaprenyl diphosphate + UDP-N-acetyl-alpha-D-glucosamine = beta-D-GlcNAc-(1-&gt;4)-Mur2Ac(oyl-L-Ala-gamma-D-Glu-L-Lys-D-Ala-D-Ala)-di-trans,octa-cis-undecaprenyl diphosphate + UDP + H(+). The protein operates within cell wall biogenesis; peptidoglycan biosynthesis. Its function is as follows. Cell wall formation. Catalyzes the transfer of a GlcNAc subunit on undecaprenyl-pyrophosphoryl-MurNAc-pentapeptide (lipid intermediate I) to form undecaprenyl-pyrophosphoryl-MurNAc-(pentapeptide)GlcNAc (lipid intermediate II). The polypeptide is UDP-N-acetylglucosamine--N-acetylmuramyl-(pentapeptide) pyrophosphoryl-undecaprenol N-acetylglucosamine transferase (Limosilactobacillus fermentum (strain NBRC 3956 / LMG 18251) (Lactobacillus fermentum)).